Consider the following 555-residue polypeptide: Branched-chain-amino-acid aminotransferase-like protein 1 (555 aa).

The protein belongs to the class-IV pyridoxal-phosphate-dependent aminotransferase family.

This chain is Branched-chain-amino-acid aminotransferase-like protein 1, found in Arabidopsis thaliana (Mouse-ear cress).